A 430-amino-acid polypeptide reads, in one-letter code: Probable protein phosphatase 1N (430 aa).

The tract at residues 16–65 (CKKKEREKEGREEEEEEEAGRRAPEGPRSLLTAPRRAQRPHGGAEASGGL) is disordered. Over residues 17-26 (KKKEREKEGR) the composition is skewed to basic and acidic residues. A PPM-type phosphatase domain is found at 66–326 (RFGASAAQGW…DNMTCILVCF (261 aa)). Mn(2+) contacts are provided by Asp103, Gly104, Asp274, and Asp317. Residues 407–430 (GEKGQDGAGKSNPTHLGSALDMEA) are disordered.

The protein belongs to the PP2C family. Requires Mg(2+) as cofactor. Mn(2+) serves as cofactor.

The enzyme catalyses O-phospho-L-seryl-[protein] + H2O = L-seryl-[protein] + phosphate. The catalysed reaction is O-phospho-L-threonyl-[protein] + H2O = L-threonyl-[protein] + phosphate. This Homo sapiens (Human) protein is Probable protein phosphatase 1N (PPM1N).